Here is a 240-residue protein sequence, read N- to C-terminus: UDP-2,3-diacylglucosamine hydrolase (240 aa).

Residues Asp8, His10, Asp41, Asn79, and His114 each contribute to the Mn(2+) site. Substrate is bound at residue 79 to 80 (NR). The substrate site is built by Asp122, Ser160, Asn164, Lys167, and His195. Mn(2+) contacts are provided by His195 and His197.

It belongs to the LpxH family. Mn(2+) is required as a cofactor.

It is found in the cell inner membrane. The enzyme catalyses UDP-2-N,3-O-bis[(3R)-3-hydroxytetradecanoyl]-alpha-D-glucosamine + H2O = 2-N,3-O-bis[(3R)-3-hydroxytetradecanoyl]-alpha-D-glucosaminyl 1-phosphate + UMP + 2 H(+). It functions in the pathway glycolipid biosynthesis; lipid IV(A) biosynthesis; lipid IV(A) from (3R)-3-hydroxytetradecanoyl-[acyl-carrier-protein] and UDP-N-acetyl-alpha-D-glucosamine: step 4/6. Its function is as follows. Hydrolyzes the pyrophosphate bond of UDP-2,3-diacylglucosamine to yield 2,3-diacylglucosamine 1-phosphate (lipid X) and UMP by catalyzing the attack of water at the alpha-P atom. Involved in the biosynthesis of lipid A, a phosphorylated glycolipid that anchors the lipopolysaccharide to the outer membrane of the cell. In Salmonella agona (strain SL483), this protein is UDP-2,3-diacylglucosamine hydrolase.